We begin with the raw amino-acid sequence, 355 residues long: Peptide chain release factor 1 (355 aa).

N5-methylglutamine is present on Q233. A compositionally biased stretch (basic and acidic residues) spans 281–293 (RRNKEQERADSRR). Positions 281-308 (RRNKEQERADSRRGQIGSGDRSERIRTY) are disordered.

This sequence belongs to the prokaryotic/mitochondrial release factor family. In terms of processing, methylated by PrmC. Methylation increases the termination efficiency of RF1.

It localises to the cytoplasm. In terms of biological role, peptide chain release factor 1 directs the termination of translation in response to the peptide chain termination codons UAG and UAA. The protein is Peptide chain release factor 1 of Rickettsia akari (strain Hartford).